Consider the following 209-residue polypeptide: Uracil phosphoribosyltransferase (209 aa).

5-phospho-alpha-D-ribose 1-diphosphate contacts are provided by residues R79, R104, and 131 to 139 (DPMLATGGS). Residues V194 and 199–201 (GDA) each bind uracil. 5-phospho-alpha-D-ribose 1-diphosphate is bound at residue D200.

This sequence belongs to the UPRTase family. It depends on Mg(2+) as a cofactor.

The enzyme catalyses UMP + diphosphate = 5-phospho-alpha-D-ribose 1-diphosphate + uracil. It functions in the pathway pyrimidine metabolism; UMP biosynthesis via salvage pathway; UMP from uracil: step 1/1. With respect to regulation, allosterically activated by GTP. Its function is as follows. Catalyzes the conversion of uracil and 5-phospho-alpha-D-ribose 1-diphosphate (PRPP) to UMP and diphosphate. The polypeptide is Uracil phosphoribosyltransferase (Bacillus cereus (strain Q1)).